Consider the following 178-residue polypeptide: TM2 domain-containing protein biscotti (178 aa).

The signal sequence occupies residues 1 to 18 (MFPVLLLLLFFFAKETHQ). At 19–99 (INVDCNELQM…YHLDTTLLLS (81 aa)) the chain is on the extracellular side. Asn69 and Asn75 each carry an N-linked (GlcNAc...) asparagine glycan. The region spanning 94–137 (TTLLLSVFLGMFGVDRFYLGYPGIGLLKFCTLGGMFLGQLIDIV) is the TM2 domain. A helical transmembrane segment spans residues 100 to 120 (VFLGMFGVDRFYLGYPGIGLL). The Cytoplasmic segment spans residues 121–124 (KFCT). A helical membrane pass occupies residues 125–145 (LGGMFLGQLIDIVLIALQVVG). Residues 146-178 (PADGSAYVIPYYGAGIHIVRSDNTTYRLPRDDW) are Extracellular-facing. The N-linked (GlcNAc...) asparagine glycan is linked to Asn168.

Belongs to the TM2 family.

It localises to the membrane. Its function is as follows. Positive regulator of Notch signaling. Maternal neurogenic factor involved in Notch signaling-dependent neuroectodermal specification during early embryogenesis. Functions cooperatively with amx/TM2D3 and amrt/TM2D2. The sequence is that of TM2 domain-containing protein biscotti from Drosophila melanogaster (Fruit fly).